Consider the following 87-residue polypeptide: MIDFIQRVVVTQKSTMLLESERYTFDVDVNLSKTDIKTLIQDLYGVQVVAVNTHRLPRRKTRFGGVKTRTKRAIIRLKNGDTLPIFD.

Belongs to the universal ribosomal protein uL23 family. As to quaternary structure, part of the 50S ribosomal subunit.

It localises to the plastid. Its subcellular location is the chloroplast. In terms of biological role, binds to 23S rRNA. The sequence is that of Large ribosomal subunit protein uL23c (rpl23) from Ostreococcus tauri.